A 487-amino-acid polypeptide reads, in one-letter code: MGVIGIQLVVTMVMASVMQKIIPHYSLARWLLCNGSLRWYQHPSEEELRILAGKQQKGKSKKDRKYNGHIENKPLTIPKDIDLHLETKSVTEVDTLALHYFPEYQWLVDFTVAATIVYLVTEVYYSFMKPTQEMNISLVWCLLVLSFAIKVLFSLTTHYFKVEDGGERSVCVTFGFFFFVKAMAVLIVTENYLEFGLETGFTNFSDSAMQFLEKQGLESQGPVSKLTFKFFLAVFCSLIGAFLTFPGLRLAQMHLDALNMATEKITQTLLHINFLAPLFMVLLWVKPITKDYIMNPPLGRESVPLMTEATFDTLRLWLIILLCVLRLAMMRSHLQAYLNLAQKCVDQMKKEAGRISTVELQKMVARVFYYLCVIALQYVAPLVMLLHMTLLLKTLGNHSWGIYPEAAFPLPVDNNLPANSAYPELPSPDGKMKVTVTQITVALSSLKNIFTPLLFRGLLSFLTWWIAACLFSTSLFGLFYHQYLTVA.

Residue asparagine 34 is glycosylated (N-linked (GlcNAc...) asparagine). Residues 107 to 127 (LVDFTVAATIVYLVTEVYYSF) traverse the membrane as a helical segment. N-linked (GlcNAc...) asparagine glycosylation is present at asparagine 135. 2 consecutive transmembrane segments (helical) span residues 136 to 156 (ISLV…FSLT) and 169 to 189 (SVCV…LIVT). An N-linked (GlcNAc...) asparagine glycan is attached at asparagine 203. The next 5 helical transmembrane spans lie at 228–248 (FKFF…FPGL), 265–285 (ITQT…LLWV), 305–325 (LMTE…LCVL), 367–387 (VFYY…MLLH), and 459–479 (LSFL…FGLF).

This sequence belongs to the TMEM161 family.

Its subcellular location is the cell membrane. In terms of biological role, essential for maintaining normal cardiac rhythm in the developing heart and for neonatal survival. Inhibits potassium and calcium currents in the cardiomyocytes, this assists in timely action potential repolarization and thereby maintains normal cardiac rhythm. This Mus musculus (Mouse) protein is Transmembrane protein 161B (Tmem161b).